The sequence spans 317 residues: MLTFQQMILTLQAYWDRQGCALLQPIDLEVGAGTSHVHTFLRAIGPEPWRAAYVQPSRRPKDGRYGENPNRLQHYYQYQVVLKPAPENILELYLGSLEALGLDLKQNDIRFVEDDWENPTLGAWGLGWEVWLNGMEVTQFTYFQQVGGIDCKPITGEITYGIERLAMYLQKVENIYDLVWTEWQENGETRRLTYGDVYHQNEVEQSTYNFEHSNTEILFRHFAEHESEAKRLMGDTGEKAEGAQEKAAGTRLALPAYEQVLKAAHTFNLLDARGAISVTERAAYIGRIRNLSRQVAQAYYDSREALGFPMCKTEARA.

The protein belongs to the class-II aminoacyl-tRNA synthetase family. As to quaternary structure, tetramer of two alpha and two beta subunits.

Its subcellular location is the cytoplasm. It catalyses the reaction tRNA(Gly) + glycine + ATP = glycyl-tRNA(Gly) + AMP + diphosphate. The protein is Glycine--tRNA ligase alpha subunit of Cupriavidus metallidurans (strain ATCC 43123 / DSM 2839 / NBRC 102507 / CH34) (Ralstonia metallidurans).